A 432-amino-acid polypeptide reads, in one-letter code: PC-esterase domain-containing protein 1B (432 aa).

Disordered stretches follow at residues 264-293 (EWIK…LSPP) and 398-432 (RGFG…PRPQ).

Belongs to the PC-esterase family.

The sequence is that of PC-esterase domain-containing protein 1B from Homo sapiens (Human).